We begin with the raw amino-acid sequence, 134 residues long: Large ribosomal subunit protein uL22 (134 aa).

The protein belongs to the universal ribosomal protein uL22 family. In terms of assembly, part of the 50S ribosomal subunit. Contacts protein L32.

Functionally, this protein binds specifically to 23S rRNA; its binding is stimulated by other ribosomal proteins, e.g. L4, L17, and L20. It is important during the early stages of 50S assembly. It makes multiple contacts with different domains of the 23S rRNA in the assembled 50S subunit and ribosome. In terms of biological role, the globular domain of the protein is located by the polypeptide exit tunnel on the outside of the subunit while an extended beta-hairpin forms part of the wall of the tunnel. Forms a pair of 'tweezers' with L32 that hold together two different domains of the 23S rRNA. Interacts with the tunnel-blocking modified macrolide azithromycin. Upon binding of the macrolide troleadomycin to the ribosome, the tip of the beta-hairpin is displaced, which severely restricts the tunnel. This and experiments in E.coli have led to the suggestion that it is part of the gating mechanism involved in translation arrest in the absence of the protein export system. This Deinococcus radiodurans (strain ATCC 13939 / DSM 20539 / JCM 16871 / CCUG 27074 / LMG 4051 / NBRC 15346 / NCIMB 9279 / VKM B-1422 / R1) protein is Large ribosomal subunit protein uL22 (rplV).